The primary structure comprises 589 residues: Transmembrane 9 superfamily member 1 (589 aa).

The first 27 residues, 1 to 27, serve as a signal peptide directing secretion; it reads MTVLGHPRSWSCHCLPVLILLLGIGHG. The N-linked (GlcNAc...) asparagine glycan is linked to Asn178. 4 consecutive transmembrane segments (helical) span residues 237–257, 310–330, 339–359, and 373–393; these read LSII…AVIL, VLGV…MALL, GAIN…SGYV, and VWNI…TWSV. The N-linked (GlcNAc...) asparagine glycan is linked to Asn401. 3 helical membrane-spanning segments follow: residues 412-432, 482-502, and 518-538; these read ILLL…IGGI, GILF…SIAL, and SVLS…FYYA. N-linked (GlcNAc...) asparagine glycosylation is present at Asn542. The chain crosses the membrane as a helical span at residues 552–572; sequence FFGYSLLTGYVFFLMLGTISF.

It belongs to the nonaspanin (TM9SF) (TC 9.A.2) family.

It is found in the lysosome membrane. The protein resides in the cytoplasmic vesicle. Its subcellular location is the autophagosome membrane. Its function is as follows. Plays an essential role in autophagy. This is Transmembrane 9 superfamily member 1 (Tm9sf1) from Rattus norvegicus (Rat).